The chain runs to 719 residues: Polyphosphate kinase (719 aa).

Asn54 lines the ATP pocket. The Mg(2+) site is built by Arg379 and Arg409. The region spanning 434-468 (THLKTHSKIALVVKRMNNKLTSFIHLGTGNYNDKT) is the PLD phosphodiesterase domain. The active-site Phosphohistidine intermediate is His439. ATP contacts are provided by Tyr472, Arg568, and His596.

The protein belongs to the polyphosphate kinase 1 (PPK1) family. Mg(2+) serves as cofactor. An intermediate of this reaction is the autophosphorylated ppk in which a phosphate is covalently linked to a histidine residue through a N-P bond.

It catalyses the reaction [phosphate](n) + ATP = [phosphate](n+1) + ADP. Its function is as follows. Catalyzes the reversible transfer of the terminal phosphate of ATP to form a long-chain polyphosphate (polyP). This Staphylococcus saprophyticus subsp. saprophyticus (strain ATCC 15305 / DSM 20229 / NCIMB 8711 / NCTC 7292 / S-41) protein is Polyphosphate kinase.